A 597-amino-acid polypeptide reads, in one-letter code: tRNA uridine 5-carboxymethylaminomethyl modification enzyme MnmG (597 aa).

An FAD-binding site is contributed by 10-15 (GGGHAG). An NAD(+)-binding site is contributed by 267–281 (GPRYCPSIEDKVVRF).

It belongs to the MnmG family. Homodimer. Heterotetramer of two MnmE and two MnmG subunits. Requires FAD as cofactor.

It is found in the cytoplasm. NAD-binding protein involved in the addition of a carboxymethylaminomethyl (cmnm) group at the wobble position (U34) of certain tRNAs, forming tRNA-cmnm(5)s(2)U34. This is tRNA uridine 5-carboxymethylaminomethyl modification enzyme MnmG from Thermus thermophilus (strain ATCC 27634 / DSM 579 / HB8).